The primary structure comprises 442 residues: tRNA modification GTPase MnmE (442 aa).

Arg21, Glu79, and Lys118 together coordinate (6S)-5-formyl-5,6,7,8-tetrahydrofolate. A TrmE-type G domain is found at 214–367; the sequence is GFKIAIVGKP…LKEELQNYLN (154 aa). Asn224 contributes to the K(+) binding site. Residues 224–229, 243–249, and 268–271 each bind GTP; these read NVGKSS, SDIAGTT, and DTAG. Ser228 lines the Mg(2+) pocket. Positions 243, 245, and 248 each coordinate K(+). Thr249 serves as a coordination point for Mg(2+). Lys442 lines the (6S)-5-formyl-5,6,7,8-tetrahydrofolate pocket.

Belongs to the TRAFAC class TrmE-Era-EngA-EngB-Septin-like GTPase superfamily. TrmE GTPase family. As to quaternary structure, homodimer. Heterotetramer of two MnmE and two MnmG subunits. It depends on K(+) as a cofactor.

It localises to the cytoplasm. Its function is as follows. Exhibits a very high intrinsic GTPase hydrolysis rate. Involved in the addition of a carboxymethylaminomethyl (cmnm) group at the wobble position (U34) of certain tRNAs, forming tRNA-cmnm(5)s(2)U34. The protein is tRNA modification GTPase MnmE of Campylobacter jejuni subsp. jejuni serotype O:23/36 (strain 81-176).